Consider the following 506-residue polypeptide: Protein MGF 505-9R (506 aa).

The protein belongs to the asfivirus MGF 505 family.

Plays a role in virus cell tropism, and may be required for efficient virus replication in macrophages. This chain is Protein MGF 505-9R, found in Ornithodoros (relapsing fever ticks).